The sequence spans 259 residues: Protein unc-50 homolog (259 aa).

Polar residues predominate over residues 1–15; the sequence is MLPTSSPQIHRNGSL. A disordered region spans residues 1–22; that stretch reads MLPTSSPQIHRNGSLSERDAAR. Residues 1–80 are Cytoplasmic-facing; that stretch reads MLPTSSPQIH…TKDQWARDDP (80 aa). A helical membrane pass occupies residues 81-101; that stretch reads AFLVLLSIWLCVSTVGFGLVL. At 102 to 110 the chain is on the lumenal side; the sequence is DMGFVETLT. The helical transmembrane segment at 111–131 threads the bilayer; that stretch reads LLLWVVFIDCIGVGLLISTLM. At 132-162 the chain is on the cytoplasmic side; it reads WFVTNKYLMKHPNRDYDVEWGYAFDVHLNAF. A helical membrane pass occupies residues 163–183; the sequence is YPLLVILHFLQLFFINHVVVI. At 184 to 198 the chain is on the lumenal side; sequence SSDWFLGYFVGNTMW. A helical membrane pass occupies residues 199–219; the sequence is LIAIGYYVYITFLGYSALPFL. At 220 to 222 the chain is on the cytoplasmic side; it reads KNT. Residues 223–243 form a helical membrane-spanning segment; it reads VVLLYPFALLGLLYVLSISLG. Topologically, residues 244–259 are lumenal; the sequence is WNFTKGLCWFYKHRVQ.

The protein belongs to the unc-50 family.

The protein localises to the nucleus inner membrane. It is found in the golgi apparatus membrane. Functionally, involved in the cell surface expression of neuronal nicotinic receptors. Binds RNA. The chain is Protein unc-50 homolog (unc50) from Danio rerio (Zebrafish).